We begin with the raw amino-acid sequence, 534 residues long: Cysteine/serine-rich nuclear protein 2 (534 aa).

M1 is modified (N-acetylmethionine). 2 disordered regions span residues 1-52 and 480-534; these read MDAF…FTPT and DCGL…PLAV. A compositionally biased stretch (low complexity) spans 31–40; sequence SSDSADSCDS. The segment covering 42–52 has biased composition (polar residues); sequence NPPTTASFTPT. Basic and acidic residues predominate over residues 480 to 492; the sequence is DCGLKEPESEDLH.

Belongs to the AXUD1 family. In terms of tissue distribution, highest expression detected in thymus, brain and ovary. Low levels detected in naive T-cells.

Its subcellular location is the nucleus. In terms of biological role, binds to the consensus sequence 5'-AGAGTG-3' and has transcriptional activator activity. May play a role in apoptosis. This Mus musculus (Mouse) protein is Cysteine/serine-rich nuclear protein 2 (Csrnp2).